Reading from the N-terminus, the 397-residue chain is MLAQSCCLRLLILLLLFTSICSVSKKSLKYFRNRKLRERRIKLFGTKKTEIQSLLISTWNYTDANLQAWSVLQQGHRRTRQAVIQGCMACQNQRCGRLLAGRSSPDTEGALTLEAAIMDGESLEYGAVAGMDGVRNAILVADAVLKYTKHSVLVGKSATKFARSLGYKEEYLTDARTKNVLKKWSSNGCQPNFWRDVHPSPAENCGPYSPLPEHLHQHPMHQEYAITQGQHDQLAFLALDAEGKFHVASQSSGAQFRIPGRVGDSAVPGAGIYADNEVGGAVASGDGDVLMRHLPAFLAVEAMRAGKDPDQAAEWVVQRLLRHNTEFNGAVVVVNRRGIYAAACAGLDEFHFVVSGGKEYLSMARVERVKCLERENEVIDGGPKGLFPTIPEKQKVP.

The N-terminal stretch at 1-22 is a signal peptide; that stretch reads MLAQSCCLRLLILLLLFTSICS. 3 cysteine pairs are disulfide-bonded: Cys90–Cys95, Cys189–Cys205, and Cys344–Cys371.

It belongs to the Ntn-hydrolase family.

The protein is L-asparaginase-like protein GD25160 of Drosophila simulans (Fruit fly).